The primary structure comprises 661 residues: DNA cross-link repair protein PSO2/SNM1 (661 aa).

The interval 1–44 is disordered; the sequence is MSRKSIVQIRRSEVKRKRSSTASSTSEGKTLHKNTHTSSKRQRT. Over residues 31 to 43 the composition is skewed to basic residues; it reads LHKNTHTSSKRQR. Residues 144–174 form a UBZ4-type zinc finger; that stretch reads VIQCPICLENLSHLELYERETHCDTCIGSDP. Residues Cys-147, Cys-150, His-165, and Cys-169 each coordinate Zn(2+).

It belongs to the DNA repair metallo-beta-lactamase (DRMBL) family.

The protein resides in the nucleus. Required for DNA interstrand cross-link repair. This requires cleavage of cross-linked DNA to generate DNA double strand breaks (DSBs). This protein has 5' exonuclease activity on single-stranded and double-stranded DNA, which appears to be necessary for the processing of DNA double strand breaks prior to ligation. The chain is DNA cross-link repair protein PSO2/SNM1 (PSO2) from Saccharomyces cerevisiae (strain ATCC 204508 / S288c) (Baker's yeast).